Reading from the N-terminus, the 430-residue chain is MLDPNLLRNEPDAVAEKLARRGFKLDVDKLGALEERRKVLQVKTENLQAERNSRSKSIGQAKARGEDIEPLRLEVNKLGEELDAAKAELDALQAEIRDIALTIPNLPADEVPVGKDENDNVEVSCWGTPREFDFEVRDHVTLGEMHSGLDFAAAVKLTGSRFVVMKGQIARMHRALSQFMLDLHTEQHGYSENYVPYLVNQDTLYGTGQLPKFAGDLFHTRPLEEEADTSNYALIPTAEVPLTNLVRGEIIDEDDLPIKMTAHTPCFRSEAGSYGRDTRGLIRMHQFDKVEMVQIVRPEDSMAALEEMTGHAEKVLQLLGLPYRKIILCTGDMGFGACKTYDLEVWIPAQNTYREISSCSNVWDFQARRMQARCRSKSDKKTRLVHTLNGSGLAVGRTLVAVMENYQQADGRIEVPEVLRPYMNGLEYIG.

237–239 (TAE) is an L-serine binding site. 268-270 (RSE) is an ATP binding site. Residue Glu-291 participates in L-serine binding. 355–358 (EISS) is an ATP binding site. Residue Ser-391 participates in L-serine binding.

It belongs to the class-II aminoacyl-tRNA synthetase family. Type-1 seryl-tRNA synthetase subfamily. Homodimer. The tRNA molecule binds across the dimer.

It is found in the cytoplasm. It carries out the reaction tRNA(Ser) + L-serine + ATP = L-seryl-tRNA(Ser) + AMP + diphosphate + H(+). The catalysed reaction is tRNA(Sec) + L-serine + ATP = L-seryl-tRNA(Sec) + AMP + diphosphate + H(+). The protein operates within aminoacyl-tRNA biosynthesis; selenocysteinyl-tRNA(Sec) biosynthesis; L-seryl-tRNA(Sec) from L-serine and tRNA(Sec): step 1/1. Catalyzes the attachment of serine to tRNA(Ser). Is also able to aminoacylate tRNA(Sec) with serine, to form the misacylated tRNA L-seryl-tRNA(Sec), which will be further converted into selenocysteinyl-tRNA(Sec). The polypeptide is Serine--tRNA ligase (Shigella dysenteriae serotype 1 (strain Sd197)).